The following is a 178-amino-acid chain: Large ribosomal subunit protein bL17 (178 aa).

Belongs to the bacterial ribosomal protein bL17 family. In terms of assembly, part of the 50S ribosomal subunit. Contacts protein L32.

The chain is Large ribosomal subunit protein bL17 from Lachnospira eligens (strain ATCC 27750 / DSM 3376 / VPI C15-48 / C15-B4) (Eubacterium eligens).